Consider the following 381-residue polypeptide: MRCLVVLLAVFALSQGAEITRIPLYKGKPLRKALKERGLLEDFLQKQQYGVSSEYSGFGEVASVPLTNYLDSQYFGKIYLGTPPQEFTVLFDTGSSDFWVPSIYCKSNACKNHQRFDPRKSSTFQNLGKPLSIRYGTGSMQGILGYDTVTVSNIVDIQQTVGLSTQEPGDVFTYAEFDGILGMAYPSLASEYSVPVFDNMMDRRLVAQDLFSVYMDRSGQGSMLTLGAIDPSYYTGSLHWVPVTLQKYWQFTVDSVTISGAVVACEGGCQAILDTGTSKLVGPSSDILNIQQAIGATQNQYGEFDIDCDSLSSMPTVVFEINGKMYPLTPYAYTSQEEGFCTSGFQGENHSHQWILGDVFIREYYSVFDRANNLVGLAKAI.

Residues 1–16 (MRCLVVLLAVFALSQG) form the signal peptide. Positions 17–58 (AEITRIPLYKGKPLRKALKERGLLEDFLQKQQYGVSSEYSGF) are cleaved as a propeptide — activation peptide. In terms of domain architecture, Peptidase A1 spans 74–378 (YFGKIYLGTP…DRANNLVGLA (305 aa)). Asp92 is an active-site residue. 2 disulfide bridges follow: Cys105/Cys110 and Cys265/Cys269. Asp274 is an active-site residue. A disulfide bond links Cys308 and Cys341.

This sequence belongs to the peptidase A1 family. As to quaternary structure, monomer.

It carries out the reaction Broad specificity similar to that of pepsin A. Clots milk by cleavage of a single 104-Ser-Phe-|-Met-Ala-107 bond in kappa-chain of casein.. Functionally, chymosin is synthesized in the mucosa of the stomach. The enzyme hydrolyzes casein to paracasein. The protein is Chymosin (CYM) of Ovis aries (Sheep).